The chain runs to 175 residues: Keratin-associated protein 13-2 (175 aa).

Tandem repeats lie at residues cysteine 46 to glycine 55, cysteine 56 to serine 65, cysteine 66 to proline 75, cysteine 76 to threonine 85, and cysteine 92 to glycine 101. The interval cysteine 46–glycine 101 is 5 X 10 AA approximate repeats.

It belongs to the PMG family. As to quaternary structure, interacts with hair keratins.

Functionally, in the hair cortex, hair keratin intermediate filaments are embedded in an interfilamentous matrix, consisting of hair keratin-associated proteins (KRTAP), which are essential for the formation of a rigid and resistant hair shaft through their extensive disulfide bond cross-linking with abundant cysteine residues of hair keratins. The matrix proteins include the high-sulfur and high-glycine-tyrosine keratins. This is Keratin-associated protein 13-2 (KRTAP13-2) from Homo sapiens (Human).